We begin with the raw amino-acid sequence, 457 residues long: NADH-quinone oxidoreductase subunit N (457 aa).

Helical transmembrane passes span 2 to 22 (NAII…FIGL), 25 to 45 (LIYP…ACTF), 60 to 80 (NYSV…FILF), 92 to 112 (GDHY…VSFS), 114 to 134 (MSML…LAGS), 149 to 169 (FILG…IYGA), 188 to 208 (FFIG…AVPF), 222 to 242 (FITA…FYLM), 253 to 273 (YLSH…NIAA), 283 to 303 (LAFS…ILTI), 310 to 330 (FVYL…VQVV), 353 to 373 (AFVL…AGFF), 382 to 402 (VIHA…LISV), and 431 to 451 (VILA…DILL).

The protein belongs to the complex I subunit 2 family. In terms of assembly, NDH-1 is composed of 14 different subunits. Subunits NuoA, H, J, K, L, M, N constitute the membrane sector of the complex.

Its subcellular location is the cell inner membrane. It carries out the reaction a quinone + NADH + 5 H(+)(in) = a quinol + NAD(+) + 4 H(+)(out). In terms of biological role, NDH-1 shuttles electrons from NADH, via FMN and iron-sulfur (Fe-S) centers, to quinones in the respiratory chain. The immediate electron acceptor for the enzyme in this species is believed to be a menaquinone. Couples the redox reaction to proton translocation (for every two electrons transferred, four hydrogen ions are translocated across the cytoplasmic membrane), and thus conserves the redox energy in a proton gradient. The protein is NADH-quinone oxidoreductase subunit N of Cytophaga hutchinsonii (strain ATCC 33406 / DSM 1761 / CIP 103989 / NBRC 15051 / NCIMB 9469 / D465).